We begin with the raw amino-acid sequence, 234 residues long: Purine nucleoside phosphorylase DeoD-type (234 aa).

Residue H4 participates in a purine D-ribonucleoside binding. Phosphate is bound by residues G20, R24, R43, and 87–90 (RVGT). A purine D-ribonucleoside contacts are provided by residues E162, 178-180 (EME), and 202-203 (SD). D203 acts as the Proton donor in catalysis.

Belongs to the PNP/UDP phosphorylase family. Homohexamer; trimer of homodimers.

It catalyses the reaction a purine D-ribonucleoside + phosphate = a purine nucleobase + alpha-D-ribose 1-phosphate. It carries out the reaction a purine 2'-deoxy-D-ribonucleoside + phosphate = a purine nucleobase + 2-deoxy-alpha-D-ribose 1-phosphate. In terms of biological role, catalyzes the reversible phosphorolytic breakdown of the N-glycosidic bond in the beta-(deoxy)ribonucleoside molecules, with the formation of the corresponding free purine bases and pentose-1-phosphate. Functionally, cleavage of adenosine and its derivatives. This Geobacillus stearothermophilus (Bacillus stearothermophilus) protein is Purine nucleoside phosphorylase DeoD-type.